Here is a 316-residue protein sequence, read N- to C-terminus: Homoserine kinase (316 aa).

96–106 lines the ATP pocket; that stretch reads PHGRGLGSSGA.

Belongs to the GHMP kinase family. Homoserine kinase subfamily.

The protein resides in the cytoplasm. The catalysed reaction is L-homoserine + ATP = O-phospho-L-homoserine + ADP + H(+). It participates in amino-acid biosynthesis; L-threonine biosynthesis; L-threonine from L-aspartate: step 4/5. In terms of biological role, catalyzes the ATP-dependent phosphorylation of L-homoserine to L-homoserine phosphate. The sequence is that of Homoserine kinase from Clavibacter michiganensis subsp. michiganensis (strain NCPPB 382).